Here is an 880-residue protein sequence, read N- to C-terminus: DNA-directed RNA polymerase subunit Rpo1N (880 aa).

Cys58, Cys61, Cys68, and His71 together coordinate Zn(2+). DsDNA contacts are provided by residues Lys88 and 92–95 (EFLK). The Zn(2+) site is built by Cys98 and Cys101. Lys138 is a dsDNA binding site. Zn(2+) contacts are provided by Cys146 and Cys149. Residues Lys303, 305–310 (KEGRFR), Arg323, and Gln422 contribute to the dsDNA site. Mg(2+)-binding residues include Asp456, Asp458, and Asp460. Arg573, Cys575, Cys580, and His582 together coordinate Zn(2+). DsDNA contacts are provided by residues 812–822 (RTSQSGYMQRR) and Gln815.

The protein belongs to the RNA polymerase beta' chain family. In terms of assembly, part of the 13-subunit RNA polymerase complex. Rpo1N and Rpo5 form a cleft which docks Rpo13. Interacts with Rpo8 on the periphery of the clamp head. It depends on Mg(2+) as a cofactor. Zn(2+) serves as cofactor.

It is found in the cytoplasm. It carries out the reaction RNA(n) + a ribonucleoside 5'-triphosphate = RNA(n+1) + diphosphate. Its function is as follows. DNA-dependent RNA polymerase (RNAP) catalyzes the transcription of DNA into RNA using the four ribonucleoside triphosphates as substrates. Forms the clamp head domain. The protein is DNA-directed RNA polymerase subunit Rpo1N of Saccharolobus shibatae (strain ATCC 51178 / DSM 5389 / JCM 8931 / NBRC 15437 / B12) (Sulfolobus shibatae).